The following is a 189-amino-acid chain: GTP cyclohydrolase 1 (189 aa).

3 residues coordinate Zn(2+): Cys-78, His-81, and Cys-150.

The protein belongs to the GTP cyclohydrolase I family. As to quaternary structure, homomer.

It carries out the reaction GTP + H2O = 7,8-dihydroneopterin 3'-triphosphate + formate + H(+). It functions in the pathway cofactor biosynthesis; 7,8-dihydroneopterin triphosphate biosynthesis; 7,8-dihydroneopterin triphosphate from GTP: step 1/1. In Listeria monocytogenes serotype 4b (strain CLIP80459), this protein is GTP cyclohydrolase 1.